The sequence spans 481 residues: MRHSKRTHCPDWDSRESWGHESYRGSHKRKRRSHSSTQENRHCKPHHQFKESDCHYLEARSLNERDYRDRRYVDEYRNDYCEGYVPRHYHRDIESGYRIHCSKSSVRSRRSSPKRKRNRHCSSHQSRSKSHRRKRSRSIEDDEEGHLICQSGDVLRARYEIVDTLGEGAFGKVVECIDHGMDGMHVAVKIVKNVGRYREAARSEIQVLEHLNSTDPNSVFRCVQMLEWFDHHGHVCIVFELLGLSTYDFIKENSFLPFQIDHIRQMAYQICQSINFLHHNKLTHTDLKPENILFVKSDYVVKYNSKMKRDERTLKNTDIKVVDFGSATYDDEHHSTLVSTRHYRAPEVILALGWSQPCDVWSIGCILIEYYLGFTVFQTHDSKEHLAMMERILGPIPQHMIQKTRKRKYFHHNQLDWDEHSSAGRYVRRRCKPLKEFMLCHDEEHEKLFDLVRRMLEYDPTQRITLDEALQHPFFDLLKKK.

2 disordered regions span residues methionine 1–histidine 46 and serine 102–glutamate 143. Residues histidine 8–arginine 24 are compositionally biased toward basic and acidic residues. Basic residues-rich tracts occupy residues glycine 25 to histidine 34 and valine 106 to serine 136. A phosphoserine mark is found at serine 136 and serine 138. Positions tyrosine 159–phenylalanine 475 constitute a Protein kinase domain. ATP-binding positions include leucine 165–valine 173 and lysine 189. Residue aspartate 286 is the Proton acceptor of the active site.

This sequence belongs to the protein kinase superfamily. CMGC Ser/Thr protein kinase family. Lammer subfamily. Interacts with UBL5. Post-translationally, autophosphorylates on all three types of residues. As to expression, expressed in liver, kidney, heart, muscle, brain and endothelial cells.

It localises to the nucleus. The catalysed reaction is L-seryl-[protein] + ATP = O-phospho-L-seryl-[protein] + ADP + H(+). It carries out the reaction L-threonyl-[protein] + ATP = O-phospho-L-threonyl-[protein] + ADP + H(+). The enzyme catalyses L-tyrosyl-[protein] + ATP = O-phospho-L-tyrosyl-[protein] + ADP + H(+). With respect to regulation, TG003 inhibits its kinase activity and affects the regulation of alternative splicing mediated by phosphorylation of SR proteins. Its function is as follows. Dual specificity kinase acting on both serine/threonine and tyrosine-containing substrates. Phosphorylates serine- and arginine-rich (SR) proteins of the spliceosomal complex and may be a constituent of a network of regulatory mechanisms that enable SR proteins to control RNA splicing. Phosphorylates SRSF1 and SRSF3. Required for the regulation of alternative splicing of MAPT/TAU. Regulates the alternative splicing of tissue factor (F3) pre-mRNA in endothelial cells. The chain is Dual specificity protein kinase CLK4 (CLK4) from Homo sapiens (Human).